The following is a 253-amino-acid chain: MDLPKNRFKAALRAGQRQIGLWHTFASADVAELMATCGYDWILMDTEHSPVGPAEALAFLRAVAPYPVTGVVRPGWNDAVEIKKLLDAGAQTLLIPYVQTPDEARAAVAAVTYPPSGIRGVAGVTRATRYGAIANYAERANDEICLLVQVETRDALAQIEEIASVDGVDGVFIGPADLAASFGYPGQPSHPEVKAAILDGFAKLKKLGVPGGILSRDDTLLRASAEAGAQFIAVEIDATMIRTAALARRAEWS.

Catalysis depends on His-48, which acts as the Proton acceptor. 2 residues coordinate a divalent metal cation: Glu-151 and Asp-177.

Belongs to the HpcH/HpaI aldolase family. A divalent metal cation serves as cofactor.

It carries out the reaction D-glyceraldehyde + pyruvate = 2-dehydro-3-deoxy-L-galactonate. In terms of biological role, aldolase which can catalyze in vitro the aldolisation reaction between hydroxypyruvate (HPA) or pyruvate (PA) and D-glyceraldehyde (D-GA). The condensation of pyruvate and D-glyceraldehyde produces 2-dehydro-3-deoxy-L-galactonate. Has weak activity with hydroxypyruvate and D-glyceraldehyde. This Sagittula stellata (strain ATCC 700073 / DSM 11524 / E-37) protein is Hydroxypyruvate/pyruvate aldolase.